The chain runs to 269 residues: Spermatogenesis-associated serine-rich protein 1 (269 aa).

Residues 1–14 (MESSKDTQHGDALE) are compositionally biased toward basic and acidic residues. The segment at 1–92 (MESSKDTQHG…SKVSLPEIPK (92 aa)) is disordered. Over residues 18-38 (CLANRTSSRQNKRTSLSSSDG) the composition is skewed to polar residues. Threonine 54 carries the post-translational modification Phosphothreonine. Low complexity predominate over residues 67–86 (SSSSSSSSSSAQSNRSSKVS). Phosphoserine occurs at positions 72, 75, and 82.

The protein is Spermatogenesis-associated serine-rich protein 1 (Spats1) of Mus musculus (Mouse).